A 304-amino-acid chain; its full sequence is Transcription factor bHLH94 (304 aa).

The tract at residues 86-107 (VESHPPPQHRRKRRRTRNCKNK) is disordered. Residues 92–104 (PQHRRKRRRTRNC) show a composition bias toward basic residues. Residues 112–163 (NQRMTHIAVERNRRKQMNEYLAVLRSLMPSSYAQRGDQASIVGGAINYVKEL) form the bHLH domain.

Homodimer. As to expression, expressed constitutively in roots, leaves, stems, and flowers.

The protein resides in the nucleus. In Arabidopsis thaliana (Mouse-ear cress), this protein is Transcription factor bHLH94 (BHLH94).